A 37-amino-acid polypeptide reads, in one-letter code: Large ribosomal subunit protein bL36c (37 aa).

It belongs to the bacterial ribosomal protein bL36 family.

It is found in the plastid. This Cuscuta reflexa (Southern Asian dodder) protein is Large ribosomal subunit protein bL36c.